A 118-amino-acid polypeptide reads, in one-letter code: Cycloviolacin-O8 (118 aa).

An N-terminal signal peptide occupies residues Met1–Ala22. The propeptide occupies Thr23–Gly84. A cross-link (cyclopeptide (Gly-Asn)) is located at residues Gly85–Asn115. 3 disulfides stabilise this stretch: Cys89-Cys105, Cys93-Cys107, and Cys98-Cys112. Positions Ser116 to Ala118 are excised as a propeptide.

Cycloviolacin-O8 is a cyclic peptide. Expressed in leaves, petals, petioles and roots but not in runners (at protein level).

In terms of biological role, probably participates in a plant defense mechanism. The protein is Cycloviolacin-O8 (Voc1) of Viola odorata (Sweet violet).